The primary structure comprises 654 residues: Interferon-induced GTP-binding protein Mx1 (654 aa).

Residue M1 is modified to N-acetylmethionine. 2 stretches are compositionally biased toward basic and acidic residues: residues 1–12 and 23–32; these read MVLSDLDIKEPD and DMVREHETES. The segment at 1-33 is disordered; that stretch reads MVLSDLDIKEPDSPESGLNGSDDMVREHETESK. The Dynamin-type G domain occupies 62-335; sequence DLALPAIAVI…LIMHICKTLP (274 aa). Residues 72 to 79 form a G1 motif region; the sequence is GDQSSGKS. Position 72 to 79 (72 to 79) interacts with GTP; that stretch reads GDQSSGKS. The tract at residues 97-99 is G2 motif; the sequence is VTR. The segment at 173–176 is G3 motif; the sequence is DLPG. Residues 173–177 and 242–245 each bind GTP; these read DLPGI and TKPD. Residues 242 to 245 form a G4 motif region; sequence TKPD. The interval 274–277 is G5 motif; it reads KCRG. The segment at 336 to 361 is bundle signaling element (BSE); it reads LLENQIKETHQRITEELQKYGKDIPE. The interval 361–528 is middle domain; that stretch reads EEESEKMFSL…HFQMEQLVYC (168 aa). The tract at residues 362-624 is stalk; that stretch reads EESEKMFSLI…KDQYDWLLKE (263 aa). A disordered region spans residues 544-563; it reads EAEEEKKKKSNHYYQSEDSE. Positions 549-552 are critical for lipid-binding; sequence KKKK. The region spanning 566–654 is the GED domain; that stretch reads TAEIFQHLMA…ARQRLAKFPG (89 aa).

This sequence belongs to the TRAFAC class dynamin-like GTPase superfamily. Dynamin/Fzo/YdjA family. Homooligomer. Oligomerizes into multimeric filamentous or ring-like structures by virtue of its stalk domain. Oligomerization is critical for GTPase activity, protein stability, and recognition of viral target structures. Interacts with TRPC1, TRPC3, TRPC4, TRPC5, TRPC6 and TRPC7. Interacts with HSPA5. Interacts with DDX39A and DDX39B. Interacts with TUBB/TUBB5. In terms of processing, ISGylated.

The protein resides in the cytoplasm. The protein localises to the endoplasmic reticulum membrane. It is found in the perinuclear region. In terms of biological role, interferon-induced dynamin-like GTPase with antiviral activity. The chain is Interferon-induced GTP-binding protein Mx1 (MX1) from Ovis aries (Sheep).